The primary structure comprises 338 residues: RNA 3'-terminal phosphate cyclase (338 aa).

ATP contacts are provided by residues Gln-103 and 283-287; that span reads YLADQ. The active-site Tele-AMP-histidine intermediate is His-308.

Belongs to the RNA 3'-terminal cyclase family. Type 1 subfamily.

Its subcellular location is the cytoplasm. It carries out the reaction a 3'-end 3'-phospho-ribonucleotide-RNA + ATP = a 3'-end 2',3'-cyclophospho-ribonucleotide-RNA + AMP + diphosphate. Functionally, catalyzes the conversion of 3'-phosphate to a 2',3'-cyclic phosphodiester at the end of RNA. The mechanism of action of the enzyme occurs in 3 steps: (A) adenylation of the enzyme by ATP; (B) transfer of adenylate to an RNA-N3'P to produce RNA-N3'PP5'A; (C) and attack of the adjacent 2'-hydroxyl on the 3'-phosphorus in the diester linkage to produce the cyclic end product. The biological role of this enzyme is unknown but it is likely to function in some aspects of cellular RNA processing. This chain is RNA 3'-terminal phosphate cyclase, found in Escherichia coli O7:K1 (strain IAI39 / ExPEC).